A 554-amino-acid polypeptide reads, in one-letter code: Potassium/proton antiporter CemA (554 aa).

The helical transmembrane segment at 50–70 (SLFVVLFIPFFINIFTKIYVF) threads the bilayer. Residues 113-410 (KTENFFPEKP…VPYNFNKNTE (298 aa)) are insert. 3 helical membrane passes run 429–449 (ISAITNLLADFMGLFILLFLL), 479–499 (MLLFTDLLVGFHSPRGWEVIF), and 514–534 (IIFLLVGTFPVLLDALFKYWI).

This sequence belongs to the CemA family.

The protein localises to the plastid. The protein resides in the chloroplast inner membrane. The enzyme catalyses K(+)(in) + H(+)(out) = K(+)(out) + H(+)(in). Contributes to K(+)/H(+) antiport activity by supporting proton efflux to control proton extrusion and homeostasis in chloroplasts in a light-dependent manner to modulate photosynthesis. Prevents excessive induction of non-photochemical quenching (NPQ) under continuous-light conditions. Indirectly promotes efficient inorganic carbon uptake into chloroplasts. The protein is Potassium/proton antiporter CemA of Stigeoclonium helveticum (Green alga).